A 303-amino-acid polypeptide reads, in one-letter code: tRNA pseudouridine synthase A (303 aa).

Residue D59 is the Nucleophile of the active site. Y128 is a binding site for substrate.

It belongs to the tRNA pseudouridine synthase TruA family. In terms of assembly, homodimer.

The catalysed reaction is uridine(38/39/40) in tRNA = pseudouridine(38/39/40) in tRNA. In terms of biological role, formation of pseudouridine at positions 38, 39 and 40 in the anticodon stem and loop of transfer RNAs. The protein is tRNA pseudouridine synthase A of Bifidobacterium longum (strain DJO10A).